A 173-amino-acid chain; its full sequence is Crossover junction endodeoxyribonuclease RuvC (173 aa).

Residues aspartate 8, glutamate 67, and aspartate 139 contribute to the active site. Aspartate 8, glutamate 67, and aspartate 139 together coordinate Mg(2+).

This sequence belongs to the RuvC family. Homodimer which binds Holliday junction (HJ) DNA. The HJ becomes 2-fold symmetrical on binding to RuvC with unstacked arms; it has a different conformation from HJ DNA in complex with RuvA. In the full resolvosome a probable DNA-RuvA(4)-RuvB(12)-RuvC(2) complex forms which resolves the HJ. Mg(2+) is required as a cofactor.

It localises to the cytoplasm. The catalysed reaction is Endonucleolytic cleavage at a junction such as a reciprocal single-stranded crossover between two homologous DNA duplexes (Holliday junction).. The RuvA-RuvB-RuvC complex processes Holliday junction (HJ) DNA during genetic recombination and DNA repair. Endonuclease that resolves HJ intermediates. Cleaves cruciform DNA by making single-stranded nicks across the HJ at symmetrical positions within the homologous arms, yielding a 5'-phosphate and a 3'-hydroxyl group; requires a central core of homology in the junction. The consensus cleavage sequence is 5'-(A/T)TT(C/G)-3'. Cleavage occurs on the 3'-side of the TT dinucleotide at the point of strand exchange. HJ branch migration catalyzed by RuvA-RuvB allows RuvC to scan DNA until it finds its consensus sequence, where it cleaves and resolves the cruciform DNA. The sequence is that of Crossover junction endodeoxyribonuclease RuvC from Shewanella frigidimarina (strain NCIMB 400).